Consider the following 313-residue polypeptide: Putative serine protease 29 (313 aa).

A compositionally biased stretch (pro residues) spans 1 to 22; it reads MPTTPDPGSEPPARTPRPPPLT. Positions 1-27 are disordered; it reads MPTTPDPGSEPPARTPRPPPLTPGLSP. The Peptidase S1 domain maps to 68-310; it reads IVGGHNAPPG…YVPWILQQVG (243 aa). Cysteine 99 and cysteine 115 are disulfide-bonded. Histidine 114 acts as the Charge relay system in catalysis. N-linked (GlcNAc...) asparagine glycosylation occurs at asparagine 143. The Charge relay system role is filled by aspartate 161. Disulfide bonds link cysteine 193-cysteine 268, cysteine 226-cysteine 249, and cysteine 258-cysteine 286. Serine 262 serves as the catalytic Charge relay system.

The protein belongs to the peptidase S1 family.

The protein resides in the secreted. The protein is Putative serine protease 29 (PRSS29P) of Homo sapiens (Human).